The sequence spans 216 residues: MRDQEFWHNKWASNQIGFHLDDVNPLLPAFWQYTNPKREDTVLVPLCGKSEDLIWLATKHDEVQGVELSLIAVRAFFAEHFYTPTVTPVNGMHELYQFDELSIYTGDFFTAPVSKADIIYDRAALVALPKEMREEYANRVKQLLNPGGRILLVTLNYPQDEMSGPPFSVPVEEIEQLFEGYKVTCLNVDQADENHPKIAKKGLSRFSEEVYLIESK.

S-adenosyl-L-methionine contacts are provided by W11, L46, E67, and R122.

This sequence belongs to the class I-like SAM-binding methyltransferase superfamily. TPMT family.

It is found in the cytoplasm. The catalysed reaction is S-adenosyl-L-methionine + a thiopurine = S-adenosyl-L-homocysteine + a thiopurine S-methylether.. The protein is Thiopurine S-methyltransferase of Vibrio campbellii (strain ATCC BAA-1116).